Reading from the N-terminus, the 377-residue chain is Chaperone protein DnaJ (377 aa).

A J domain is found at 5–70 (DCYEVLGISR…QKKAAYDQYG (66 aa)). The CR-type zinc finger occupies 133–211 (GISKEIQIPT…CHGHGRYERS (79 aa)). Residues C146, C149, C163, C166, C185, C188, C199, and C202 each coordinate Zn(2+). CXXCXGXG motif repeat units follow at residues 146–153 (CEQCNGSG), 163–170 (CGTCYGQG), 185–192 (CPTCRGQG), and 199–206 (CHKCHGHG).

Belongs to the DnaJ family. As to quaternary structure, homodimer. Zn(2+) is required as a cofactor.

The protein resides in the cytoplasm. Functionally, participates actively in the response to hyperosmotic and heat shock by preventing the aggregation of stress-denatured proteins and by disaggregating proteins, also in an autonomous, DnaK-independent fashion. Unfolded proteins bind initially to DnaJ; upon interaction with the DnaJ-bound protein, DnaK hydrolyzes its bound ATP, resulting in the formation of a stable complex. GrpE releases ADP from DnaK; ATP binding to DnaK triggers the release of the substrate protein, thus completing the reaction cycle. Several rounds of ATP-dependent interactions between DnaJ, DnaK and GrpE are required for fully efficient folding. Also involved, together with DnaK and GrpE, in the DNA replication of plasmids through activation of initiation proteins. This chain is Chaperone protein DnaJ, found in Psychromonas ingrahamii (strain DSM 17664 / CCUG 51855 / 37).